Reading from the N-terminus, the 519-residue chain is Transketolase, chloroplastic (519 aa).

Mg(2+) is bound at residue D11. Residues G12 and N41 each contribute to the thiamine diphosphate site. Mg(2+) is bound by residues N41 and I43. H118 provides a ligand contact to thiamine diphosphate. Substrate-binding residues include H118, R212, and S239. Residues E266 and F293 each contribute to the thiamine diphosphate site. E266 serves as the catalytic Proton donor. Substrate is bound by residues H317, D325, and R376.

It belongs to the transketolase family. Homodimer. Mg(2+) is required as a cofactor. Requires Ca(2+) as cofactor. Mn(2+) serves as cofactor. The cofactor is Co(2+). It depends on thiamine diphosphate as a cofactor. Constitutively expressed in leaves and roots.

It is found in the plastid. The protein localises to the chloroplast. It carries out the reaction D-sedoheptulose 7-phosphate + D-glyceraldehyde 3-phosphate = aldehydo-D-ribose 5-phosphate + D-xylulose 5-phosphate. Its function is as follows. Catalyzes the transfer of a two-carbon ketol group from a ketose donor to an aldose acceptor, via a covalent intermediate with the cofactor thiamine pyrophosphate. This is Transketolase, chloroplastic (TKT3) from Craterostigma plantagineum (Blue gem).